A 359-amino-acid chain; its full sequence is Aminomethyltransferase (359 aa).

Belongs to the GcvT family. As to quaternary structure, the glycine cleavage system is composed of four proteins: P, T, L and H.

It catalyses the reaction N(6)-[(R)-S(8)-aminomethyldihydrolipoyl]-L-lysyl-[protein] + (6S)-5,6,7,8-tetrahydrofolate = N(6)-[(R)-dihydrolipoyl]-L-lysyl-[protein] + (6R)-5,10-methylene-5,6,7,8-tetrahydrofolate + NH4(+). Functionally, the glycine cleavage system catalyzes the degradation of glycine. This Alcanivorax borkumensis (strain ATCC 700651 / DSM 11573 / NCIMB 13689 / SK2) protein is Aminomethyltransferase.